The chain runs to 409 residues: N-acetylglucosamine-6-phosphate deacetylase (409 aa).

E143 is a binding site for a divalent metal cation. 154–155 (AH) is a substrate binding site. A divalent metal cation contacts are provided by H211 and H232. Substrate-binding positions include 235–236 (NA), R243, and 269–272 (DGIH). D294 serves as the catalytic Proton donor/acceptor. 328 to 330 (LGG) provides a ligand contact to substrate.

The protein belongs to the metallo-dependent hydrolases superfamily. NagA family. A divalent metal cation serves as cofactor.

It carries out the reaction N-acetyl-D-glucosamine 6-phosphate + H2O = D-glucosamine 6-phosphate + acetate. The protein operates within amino-sugar metabolism; N-acetylneuraminate degradation. Hydrolyzes the N-glycolyl group from N-glycolylglucosamine 6-phosphate (GlcNGc-6-P) in the N-glycolylneuraminic acid (Neu5Gc) degradation pathway. This is N-acetylglucosamine-6-phosphate deacetylase (Amdhd2) from Mus musculus (Mouse).